The following is a 311-amino-acid chain: Heme A synthase (311 aa).

Residues 1–6 (MQRFIK) are Cytoplasmic-facing. The helical transmembrane segment at 7 to 27 (WLAVITSLDLLIVLLGGALVT) threads the bilayer. Topologically, residues 28 to 62 (KTGSGQGCGKSWPLCNGEFVPSNLSMETIIELSHR) are extracellular. A disulfide bridge links cysteine 35 with cysteine 42. Residue glutamate 58 is part of the active site. Histidine 61 provides a ligand contact to heme o. A helical membrane pass occupies residues 63-83 (LTSGSAGILVTLLCILSWKYY). The Cytoplasmic segment spans residues 84 to 91 (KHVRETKT). The helical transmembrane segment at 92 to 112 (LAILSFVFLVAQALMGAAAVV) threads the bilayer. At 113–121 (WGQMPAVLA) the chain is on the extracellular side. A helical membrane pass occupies residues 122–142 (IHFGISLISFASVILLTCLIF). Residue histidine 123 participates in heme o binding. Residues 143 to 159 (EIDQKFDARSLIMDKKM) lie on the Cytoplasmic side of the membrane. Residues 160–180 (KFHIYGVTIYSYIVVYTGALV) traverse the membrane as a helical segment. Residues 181–211 (RHERASLACPDFPLCSKNRPMPTQLHEWVQM) lie on the Extracellular side of the membrane. A disulfide bridge connects residues cysteine 189 and cysteine 195. Residues 212-232 (GHRVAAMLIFAWILYAMILAI) traverse the membrane as a helical segment. Histidine 213 is a heme b binding site. At 233–243 (RHYKQQPVVYW) the chain is on the cytoplasmic side. Residues 244-264 (GWIISFILVTLQAIVGILVVF) form a helical membrane-spanning segment. Residues 265–271 (TNASLSM) lie on the Extracellular side of the membrane. A helical membrane pass occupies residues 272-292 (ALLHSLFISCLFAVLCYLVML). Residue histidine 275 participates in heme b binding. Residues 293-311 (GTRSKVNAKEAASTSKQTK) are Cytoplasmic-facing.

Belongs to the COX15/CtaA family. Type 1 subfamily. In terms of assembly, interacts with CtaB. The cofactor is heme b.

Its subcellular location is the cell membrane. It catalyses the reaction Fe(II)-heme o + 2 A + H2O = Fe(II)-heme a + 2 AH2. Its pathway is porphyrin-containing compound metabolism; heme A biosynthesis; heme A from heme O: step 1/1. Its function is as follows. Catalyzes the conversion of heme O to heme A by two successive hydroxylations of the methyl group at C8. The first hydroxylation forms heme I, the second hydroxylation results in an unstable dihydroxymethyl group, which spontaneously dehydrates, resulting in the formyl group of heme A. This chain is Heme A synthase, found in Bacillus cereus (strain ATCC 10987 / NRS 248).